Here is an 876-residue protein sequence, read N- to C-terminus: Neurotrypsin (876 aa).

The N-terminal stretch at 1–20 (MTLARFVLALMLGALPEVVG) is a signal peptide. N-linked (GlcNAc...) asparagine glycosylation occurs at N26. Residues 29–89 (LHHSHRHSPP…ALQAGHTPRP (61 aa)) form a disordered region. Residues 43–54 (YPSYYLPTQQRP) are compositionally biased toward low complexity. A compositionally biased stretch (pro residues) spans 57–72 (TRPPPPLPRFPRPPRA). Residues 94–166 (CPAGEPWVSV…GKVDWGYCDC (73 aa)) enclose the Kringle domain. 20 disulfides stabilise this stretch: C94/C166, C110/C150, C139/C164, C196/C260, C209/C270, C240/C250, C306/C370, C319/C380, C350/C360, C413/C476, C426/C486, C456/C466, C526/C590, C539/C600, C570/C580, C620/C751, C662/C678, C766/C832, C795/C809, and C822/C851. 4 SRCR domains span residues 171-272 (VRLR…TCSF), 281-382 (IRLA…SCTP), 388-488 (IRLA…ACYP), and 501-602 (VRLM…ICDY). Positions 620-631 (CGLRLLHRRQKR) are zymogen activation region. The Peptidase S1 domain occupies 632–875 (IIGGKNSLRG…FVPWIKSVTK (244 aa)). The Charge relay system role is filled by H677. An N-linked (GlcNAc...) asparagine glycan is attached at N684. D727 acts as the Charge relay system in catalysis. S826 acts as the Charge relay system in catalysis.

Belongs to the peptidase S1 family.

The protein resides in the secreted. In terms of biological role, plays a role in neuronal plasticity and the proteolytic action may subserve structural reorganizations associated with learning and memory operations. The polypeptide is Neurotrypsin (PRSS12) (Gorilla gorilla gorilla (Western lowland gorilla)).